The sequence spans 164 residues: 6,7-dimethyl-8-ribityllumazine synthase (164 aa).

5-amino-6-(D-ribitylamino)uracil contacts are provided by residues F24, 58-60 (ALE), and 82-84 (AVI). 87–88 (ET) is a binding site for (2S)-2-hydroxy-3-oxobutyl phosphate. Residue H90 is the Proton donor of the active site. N115 provides a ligand contact to 5-amino-6-(D-ribitylamino)uracil. Position 129 (R129) interacts with (2S)-2-hydroxy-3-oxobutyl phosphate.

This sequence belongs to the DMRL synthase family.

The enzyme catalyses (2S)-2-hydroxy-3-oxobutyl phosphate + 5-amino-6-(D-ribitylamino)uracil = 6,7-dimethyl-8-(1-D-ribityl)lumazine + phosphate + 2 H2O + H(+). It participates in cofactor biosynthesis; riboflavin biosynthesis; riboflavin from 2-hydroxy-3-oxobutyl phosphate and 5-amino-6-(D-ribitylamino)uracil: step 1/2. Catalyzes the formation of 6,7-dimethyl-8-ribityllumazine by condensation of 5-amino-6-(D-ribitylamino)uracil with 3,4-dihydroxy-2-butanone 4-phosphate. This is the penultimate step in the biosynthesis of riboflavin. The polypeptide is 6,7-dimethyl-8-ribityllumazine synthase (Ralstonia nicotianae (strain ATCC BAA-1114 / GMI1000) (Ralstonia solanacearum)).